The sequence spans 626 residues: MAEAPLPPPPGVEVDPDFEPFSRPRSCTWPLPRPEFNPSSSANSSPAPSLQPEPAAGNVDFLSNLSLLEESEDFDPAEALGVCGDFPCQDIRQLQPPVPQQHPQQQAGTLCAPSVPSALSPASSPSPLGAQQPRKSSSSRRNAWGNLSYADLISQAIESSPEKRLTLSQIYDWMVKSVPYFKDKGDSNSSAGWKNSIRHNLSLHSKFVRVQNEGTGKSSWWILNPEGGKNGKSPRRRAASMDNNSKFAKSRGRAAKKKATMQSSQDGSSDSPGSQFSKWPGSPSSQSNDDFEAWSTFRPRTSSNASTISGRLSPIMPEQDDLGDADVHNLVYPPSATKLTSTLPSLSEMGNSENMENLLDNLNLLSPNTSTQSSPASMMQQSGYLFTSPNTSLGSPNSEYRKYSYAQTGMNPVSQMPMQTVPENKSGYRAVGQYPVPAGLLKELLTSDSPPHNDILTPVDSAVSQANSRVLAQNSLMAPSSVMPTYGSQPTHNKMSSHPHSHQPPPNHPSVNGRTMTHNSGINRLSTVKTSVQVPMPQPIQMTSMGSYPVNSCNGYGRVGIVSIHQEILPSDLDDMFIESLDCDMESIIRNDLMEDGEADFNFDSILPNQSFPHSVTTTTHSWVSG.

The segment covering 1-11 (MAEAPLPPPPG) has biased composition (pro residues). Disordered stretches follow at residues 1 to 57 (MAEA…PAAG), 90 to 142 (DIRQ…SRRN), 218 to 319 (SSWW…MPEQ), and 484 to 519 (PTYG…MTHN). 2 stretches are compositionally biased toward low complexity: residues 37–48 (NPSSSANSSPAP) and 101–133 (QHPQ…AQQP). Positions 144-238 (WGNLSYADLI…KNGKSPRRRA (95 aa)) form a DNA-binding region, fork-head. Residues 248–259 (AKSRGRAAKKKA) are compositionally biased toward basic residues. Over residues 262–277 (QSSQDGSSDSPGSQFS) the composition is skewed to low complexity. 2 stretches are compositionally biased toward polar residues: residues 298–310 (RPRT…TISG) and 484–494 (PTYGSQPTHNK).

Post-translationally, phosphorylated by AKT1; insulin-induced. In terms of processing, IGF1 rapidly induces phosphorylation of Thr-28, Ser-240 and Ser-303. Phosphorylation of Ser-240 decreases DNA-binding activity and promotes the phosphorylation of Thr-28, and Ser-303, which leads to nuclear exclusion and loss of function. Phosphorylation of Ser-313 is independent of IGF1 and leads to reduced function.

Its subcellular location is the cytoplasm. The protein resides in the nucleus. Its function is as follows. Transcription factor that regulates metabolic homeostasis in response to oxidative stress. Binds to the consensus sequence 5'-TT[G/A]TTTTG-3' and the related Daf-16 family binding element (DBE) with consensus sequence 5'-TT[G/A]TTTAC-3'. Main regulator of redox balance and osteoblast numbers and controls bone mass. Orchestrates the endocrine function of the skeleton in regulating glucose metabolism. Also acts as a key regulator of chondrogenic commitment of skeletal progenitor cells in response to lipid availability: when lipids levels are low, translocates to the nucleus and promotes expression of sox9, which induces chondrogenic commitment and suppresses fatty acid oxidation. Acts synergistically with atf4 to suppress osteocalcin/bglap activity, increasing glucose levels and triggering glucose intolerance and insulin insensitivity. Also suppresses the transcriptional activity of runx2, an upstream activator of osteocalcin/bglap. May act as a positive regulator of apoptosis in cardiac smooth muscle cells as a result of its transcriptional activation of pro-apoptotic genes. The protein is Forkhead box protein O1 of Xenopus tropicalis (Western clawed frog).